The primary structure comprises 350 residues: S-adenosylmethionine:tRNA ribosyltransferase-isomerase (350 aa).

Belongs to the QueA family. In terms of assembly, monomer.

The protein localises to the cytoplasm. The enzyme catalyses 7-aminomethyl-7-carbaguanosine(34) in tRNA + S-adenosyl-L-methionine = epoxyqueuosine(34) in tRNA + adenine + L-methionine + 2 H(+). Its pathway is tRNA modification; tRNA-queuosine biosynthesis. Transfers and isomerizes the ribose moiety from AdoMet to the 7-aminomethyl group of 7-deazaguanine (preQ1-tRNA) to give epoxyqueuosine (oQ-tRNA). The polypeptide is S-adenosylmethionine:tRNA ribosyltransferase-isomerase (Vibrio vulnificus (strain YJ016)).